Reading from the N-terminus, the 419-residue chain is Serine hydroxymethyltransferase (419 aa).

(6S)-5,6,7,8-tetrahydrofolate-binding positions include Leu-121 and 125 to 127 (GHL). An N6-(pyridoxal phosphate)lysine modification is found at Lys-230. Position 355–357 (355–357 (SPF)) interacts with (6S)-5,6,7,8-tetrahydrofolate.

It belongs to the SHMT family. As to quaternary structure, homodimer. Pyridoxal 5'-phosphate is required as a cofactor.

The protein resides in the cytoplasm. The catalysed reaction is (6R)-5,10-methylene-5,6,7,8-tetrahydrofolate + glycine + H2O = (6S)-5,6,7,8-tetrahydrofolate + L-serine. It participates in one-carbon metabolism; tetrahydrofolate interconversion. The protein operates within amino-acid biosynthesis; glycine biosynthesis; glycine from L-serine: step 1/1. Catalyzes the reversible interconversion of serine and glycine with tetrahydrofolate (THF) serving as the one-carbon carrier. This reaction serves as the major source of one-carbon groups required for the biosynthesis of purines, thymidylate, methionine, and other important biomolecules. Also exhibits THF-independent aldolase activity toward beta-hydroxyamino acids, producing glycine and aldehydes, via a retro-aldol mechanism. In Streptococcus equi subsp. zooepidemicus (strain H70), this protein is Serine hydroxymethyltransferase.